A 258-amino-acid polypeptide reads, in one-letter code: Imidazole glycerol phosphate synthase subunit HisF (258 aa).

Catalysis depends on residues Asp-11 and Asp-130.

Belongs to the HisA/HisF family. In terms of assembly, heterodimer of HisH and HisF.

The protein localises to the cytoplasm. The catalysed reaction is 5-[(5-phospho-1-deoxy-D-ribulos-1-ylimino)methylamino]-1-(5-phospho-beta-D-ribosyl)imidazole-4-carboxamide + L-glutamine = D-erythro-1-(imidazol-4-yl)glycerol 3-phosphate + 5-amino-1-(5-phospho-beta-D-ribosyl)imidazole-4-carboxamide + L-glutamate + H(+). It functions in the pathway amino-acid biosynthesis; L-histidine biosynthesis; L-histidine from 5-phospho-alpha-D-ribose 1-diphosphate: step 5/9. Functionally, IGPS catalyzes the conversion of PRFAR and glutamine to IGP, AICAR and glutamate. The HisF subunit catalyzes the cyclization activity that produces IGP and AICAR from PRFAR using the ammonia provided by the HisH subunit. The chain is Imidazole glycerol phosphate synthase subunit HisF from Xanthomonas campestris pv. campestris (strain 8004).